Here is a 304-residue protein sequence, read N- to C-terminus: Oxygen-dependent coproporphyrinogen-III oxidase (304 aa).

S94 is a binding site for substrate. A divalent metal cation-binding residues include H98 and H108. H108 (proton donor) is an active-site residue. 110-112 (NVR) serves as a coordination point for substrate. 2 residues coordinate a divalent metal cation: H147 and H177. The interval 242–277 (YVEFNLVYDRGTLFGLQTGGRTESILMSMPPLVRWQ) is important for dimerization. 260–262 (GGR) provides a ligand contact to substrate.

Belongs to the aerobic coproporphyrinogen-III oxidase family. Homodimer. It depends on a divalent metal cation as a cofactor.

It is found in the cytoplasm. It catalyses the reaction coproporphyrinogen III + O2 + 2 H(+) = protoporphyrinogen IX + 2 CO2 + 2 H2O. It participates in porphyrin-containing compound metabolism; protoporphyrin-IX biosynthesis; protoporphyrinogen-IX from coproporphyrinogen-III (O2 route): step 1/1. Functionally, involved in the heme biosynthesis. Catalyzes the aerobic oxidative decarboxylation of propionate groups of rings A and B of coproporphyrinogen-III to yield the vinyl groups in protoporphyrinogen-IX. The polypeptide is Oxygen-dependent coproporphyrinogen-III oxidase (Shewanella amazonensis (strain ATCC BAA-1098 / SB2B)).